Consider the following 411-residue polypeptide: Alpha-N-acetylgalactosaminidase (411 aa).

The first 17 residues, 1–17 (MLLKTVLLLGHVAQVLM), serve as a signal peptide directing secretion. Intrachain disulfides connect Cys-38–Cys-80 and Cys-42–Cys-49. Position 78–79 (78–79 (DD)) interacts with substrate. A glycan (N-linked (GlcNAc...) asparagine) is linked at Asn-124. A disulfide bridge links Cys-127 with Cys-158. Lys-154 serves as a coordination point for substrate. Asp-156 serves as the catalytic Nucleophile. Residue Asn-177 is glycosylated (N-linked (GlcNAc...) asparagine). Residues Cys-187 and Cys-209 are joined by a disulfide bond. Residue Ser-188 participates in substrate binding. Asn-201 carries N-linked (GlcNAc...) asparagine glycosylation. 2 residues coordinate substrate: Arg-213 and Asp-217. Catalysis depends on Asp-217, which acts as the Proton donor. A phosphoserine mark is found at Ser-322 and Ser-332. Asn-359 and Asn-385 each carry an N-linked (GlcNAc...) asparagine glycan.

Belongs to the glycosyl hydrolase 27 family. Homodimer.

It localises to the lysosome. The catalysed reaction is Cleavage of non-reducing alpha-(1-&gt;3)-N-acetylgalactosamine residues from human blood group A and AB mucin glycoproteins, Forssman hapten and blood group A lacto series glycolipids.. The enzyme catalyses a neolactoside IV(3)-alpha-GalNAc,IV(2)-alpha-Fuc-nLc4Cer(d18:1(4E)) + H2O = a neolactoside IV(2)-alpha-Fuc-nLc4Cer(d18:1(4E)) + N-acetyl-alpha-D-galactosamine. It carries out the reaction a neolactoside IV(3)-alpha-GalNAc,IV(2)-alpha-Fuc-nLc4Cer(d18:0) + H2O = a neolactoside IV(2)-alpha-Fuc-nLc4Cer(d18:0) + N-acetyl-alpha-D-galactosamine. It catalyses the reaction a globoside IV3GalNAc-Gb4Cer + H2O = N-acetyl-alpha-D-galactosamine + a globoside Gb4Cer. Functionally, removes terminal alpha-N-acetylgalactosamine residues from glycolipids and glycopeptides. Required for the breakdown of glycolipids. In Homo sapiens (Human), this protein is Alpha-N-acetylgalactosaminidase.